A 415-amino-acid polypeptide reads, in one-letter code: Casein kinase I isoform delta (415 aa).

One can recognise a Protein kinase domain in the interval 9-277; the sequence is YRLGRKIGSG…YLRQLFRNLF (269 aa). ATP is bound by residues 15–23 and lysine 38; that span reads IGSGSFGDI. Aspartate 128 functions as the Proton acceptor in the catalytic mechanism. Residues 278-364 are centrosomal localization signal (CLS); that stretch reads HRQGFSYDYV…TSPRPVSGME (87 aa). Residues 301-315 show a composition bias toward basic and acidic residues; it reads ADDAERERRDREERL. A disordered region spans residues 301–415; it reads ADDAERERRD…SSGLQSVVHR (115 aa). Residues 317–342 form an autoinhibitory region; the sequence is HSRNPATRGLPSTASGRLRGTQEVAP. Serine 328 and serine 331 each carry phosphoserine. Residues 347–358 show a composition bias toward polar residues; the sequence is TPTSHTANTSPR. Serine 370 bears the Phosphoserine mark. Omega-N-methylarginine is present on arginine 375. A compositionally biased stretch (polar residues) spans 380–400; it reads NISSSDLTGRQDTSRMSTSQI. Phosphoserine is present on residues serine 382, serine 383, serine 384, serine 407, and serine 411.

Belongs to the protein kinase superfamily. CK1 Ser/Thr protein kinase family. Casein kinase I subfamily. Monomer. Component of the circadian core oscillator, which includes the CRY proteins, CLOCK, or NPAS2, ARTNL/BMAL1 or ARTNL2/BMAL2, CSNK1D and/or CSNK1E, TIMELESS and the PER proteins. Interacts with DNMT1 and MAP1A. Interacts directly with PER1 and PER2 which may lead to their degradation. Interacts with MAPT/TAU, SNAPIN, DBNDD2, AIB1/NCOA3 and ESR1. Interacts with AKAP9/AKAP450; this interaction promotes centrosomal subcellular location. Binds to tubulins in mitotic cells upon DNA damage. Interacts with GJA1. Interacts with DDX3X; this interaction enhances CSNK1D kinase activity in vitro, but it is unclear whether this interaction is physiologically relevant. Interacts with FAM83A, FAM83B, FAM83E and FAM83H (via DUF1669). Post-translationally, autophosphorylated on serine and threonine residues; this autophosphorylation represses activity. Reactivated by phosphatase-mediated dephosphorylation. May be dephosphorylated by PP1.

The protein resides in the cytoplasm. It is found in the nucleus. It localises to the cytoskeleton. Its subcellular location is the microtubule organizing center. The protein localises to the centrosome. The protein resides in the perinuclear region. It is found in the cell membrane. It localises to the spindle. Its subcellular location is the golgi apparatus. The enzyme catalyses L-seryl-[protein] + ATP = O-phospho-L-seryl-[protein] + ADP + H(+). The catalysed reaction is L-threonyl-[protein] + ATP = O-phospho-L-threonyl-[protein] + ADP + H(+). It catalyses the reaction L-seryl-[tau protein] + ATP = O-phospho-L-seryl-[tau protein] + ADP + H(+). It carries out the reaction L-threonyl-[tau protein] + ATP = O-phospho-L-threonyl-[tau protein] + ADP + H(+). Its activity is regulated as follows. Drug-mediated inhibition leads to a delay of the oscillations with the magnitude of this effect dependent upon the timing of drug administration. Inhibited by phosphorylation. Exhibits substrate-dependent heparin activation. Its function is as follows. Essential serine/threonine-protein kinase that regulates diverse cellular growth and survival processes including Wnt signaling, DNA repair and circadian rhythms. It can phosphorylate a large number of proteins. Casein kinases are operationally defined by their preferential utilization of acidic proteins such as caseins as substrates. Phosphorylates connexin-43/GJA1, MAP1A, SNAPIN, MAPT/TAU, TOP2A, DCK, HIF1A, EIF6, p53/TP53, DVL2, DVL3, ESR1, AIB1/NCOA3, DNMT1, PKD2, YAP1, PER1 and PER2. Central component of the circadian clock. In balance with PP1, determines the circadian period length through the regulation of the speed and rhythmicity of PER1 and PER2 phosphorylation. Controls PER1 and PER2 nuclear transport and degradation. YAP1 phosphorylation promotes its SCF(beta-TRCP) E3 ubiquitin ligase-mediated ubiquitination and subsequent degradation. DNMT1 phosphorylation reduces its DNA-binding activity. Phosphorylation of ESR1 and AIB1/NCOA3 stimulates their activity and coactivation. Phosphorylation of DVL2 and DVL3 regulates WNT3A signaling pathway that controls neurite outgrowth. Phosphorylates NEDD9/HEF1. EIF6 phosphorylation promotes its nuclear export. Triggers down-regulation of dopamine receptors in the forebrain. Activates DCK in vitro by phosphorylation. TOP2A phosphorylation favors DNA cleavable complex formation. May regulate the formation of the mitotic spindle apparatus in extravillous trophoblast. Modulates connexin-43/GJA1 gap junction assembly by phosphorylation. Probably involved in lymphocyte physiology. Regulates fast synaptic transmission mediated by glutamate. The polypeptide is Casein kinase I isoform delta (CSNK1D) (Bos taurus (Bovine)).